A 737-amino-acid polypeptide reads, in one-letter code: Methylcrotonoyl-CoA carboxylase subunit alpha, mitochondrial (737 aa).

A mitochondrion-targeting transit peptide spans 1–33 (MASRLLLLPRRRSRHGGASLLLARLLSSSSSEA). Positions 38–485 (AVEKVLVANR…DTHFIERYQN (448 aa)) constitute a Biotin carboxylation domain. Residues lysine 153, 185–246 (ANKI…PRHI), glutamate 237, and histidine 272 each bind ATP. Residues 157–355 (KRIMGAAGVP…LVEWQIRIAN (199 aa)) enclose the ATP-grasp domain. Residues glutamate 312, glutamate 326, and asparagine 328 each coordinate Mn(2+). Arginine 330 is an active-site residue. The disordered stretch occupies residues 636 to 665 (YRQTLRAEQSPDDSSQPSASSEARSHPKGS). Over residues 647–657 (DDSSQPSASSE) the composition is skewed to low complexity. A Biotinyl-binding domain is found at 656–732 (SEARSHPKGS…FDSSVLFTVK (77 aa)). An N6-biotinyllysine modification is found at lysine 698.

Probably a heterodimer composed of biotin-containing alpha subunits and beta subunits. Biotin serves as cofactor. Mn(2+) is required as a cofactor.

Its subcellular location is the mitochondrion matrix. It carries out the reaction 3-methylbut-2-enoyl-CoA + hydrogencarbonate + ATP = 3-methyl-(2E)-glutaconyl-CoA + ADP + phosphate + H(+). Its pathway is amino-acid degradation; L-leucine degradation; (S)-3-hydroxy-3-methylglutaryl-CoA from 3-isovaleryl-CoA: step 2/3. Functionally, biotin-attachment subunit of the 3-methylcrotonyl-CoA carboxylase, an enzyme that catalyzes the conversion of 3-methylcrotonyl-CoA to 3-methylglutaconyl-CoA, a critical step for leucine and isovaleric acid catabolism. This is Methylcrotonoyl-CoA carboxylase subunit alpha, mitochondrial (MCCA) from Oryza sativa subsp. japonica (Rice).